The following is a 98-amino-acid chain: NADH-ubiquinone oxidoreductase chain 4L (98 aa).

3 consecutive transmembrane segments (helical) span residues 1–21 (MPLIYMNITLAFTMSLLGMLV), 29–49 (SLLCLEGMMLSLFIMITLMTL), and 58–78 (IMPITMLVFAACEAAVGLALL).

This sequence belongs to the complex I subunit 4L family. As to quaternary structure, core subunit of respiratory chain NADH dehydrogenase (Complex I) which is composed of 45 different subunits.

It is found in the mitochondrion inner membrane. It carries out the reaction a ubiquinone + NADH + 5 H(+)(in) = a ubiquinol + NAD(+) + 4 H(+)(out). Its function is as follows. Core subunit of the mitochondrial membrane respiratory chain NADH dehydrogenase (Complex I) which catalyzes electron transfer from NADH through the respiratory chain, using ubiquinone as an electron acceptor. Part of the enzyme membrane arm which is embedded in the lipid bilayer and involved in proton translocation. The protein is NADH-ubiquinone oxidoreductase chain 4L (MT-ND4L) of Pongo abelii (Sumatran orangutan).